We begin with the raw amino-acid sequence, 236 residues long: Small ribosomal subunit protein uS2c (236 aa).

This sequence belongs to the universal ribosomal protein uS2 family.

It localises to the plastid. Its subcellular location is the chloroplast. This Oryza nivara (Indian wild rice) protein is Small ribosomal subunit protein uS2c (rps2).